The primary structure comprises 1044 residues: Isoleucine--tRNA ligase (1044 aa).

A 'HIGH' region motif is present at residues 49-59 (PYCSGRIHLGT). Residues 591–595 (KMSKS) carry the 'KMSKS' region motif. Lysine 594 contacts ATP.

Belongs to the class-I aminoacyl-tRNA synthetase family. IleS type 2 subfamily. Monomer. Zn(2+) is required as a cofactor.

Its subcellular location is the cytoplasm. It carries out the reaction tRNA(Ile) + L-isoleucine + ATP = L-isoleucyl-tRNA(Ile) + AMP + diphosphate. Catalyzes the attachment of isoleucine to tRNA(Ile). As IleRS can inadvertently accommodate and process structurally similar amino acids such as valine, to avoid such errors it has two additional distinct tRNA(Ile)-dependent editing activities. One activity is designated as 'pretransfer' editing and involves the hydrolysis of activated Val-AMP. The other activity is designated 'posttransfer' editing and involves deacylation of mischarged Val-tRNA(Ile). This chain is Isoleucine--tRNA ligase, found in Methanothermobacter thermautotrophicus (strain ATCC 29096 / DSM 1053 / JCM 10044 / NBRC 100330 / Delta H) (Methanobacterium thermoautotrophicum).